Consider the following 145-residue polypeptide: Beta sliding clamp (145 aa).

This sequence belongs to the beta sliding clamp family. Forms a ring-shaped head-to-tail homodimer around DNA which binds and tethers DNA polymerases and other proteins to the DNA. The DNA replisome complex has a single clamp-loading complex (3 tau and 1 each of delta, delta', psi and chi subunits) which binds 3 Pol III cores (1 core on the leading strand and 2 on the lagging strand) each with a beta sliding clamp dimer. Additional proteins in the replisome are other copies of gamma, psi and chi, Ssb, DNA helicase and RNA primase.

It localises to the cytoplasm. In terms of biological role, confers DNA tethering and processivity to DNA polymerases and other proteins. Acts as a clamp, forming a ring around DNA (a reaction catalyzed by the clamp-loading complex) which diffuses in an ATP-independent manner freely and bidirectionally along dsDNA. Initially characterized for its ability to contact the catalytic subunit of DNA polymerase III (Pol III), a complex, multichain enzyme responsible for most of the replicative synthesis in bacteria; Pol III exhibits 3'-5' exonuclease proofreading activity. The beta chain is required for initiation of replication as well as for processivity of DNA replication. The protein is Beta sliding clamp (dnaN) of Vibrio harveyi (Beneckea harveyi).